A 491-amino-acid chain; its full sequence is CRM-domain containing factor CFM9, mitochondrial (491 aa).

Residues 1-25 (MNQVFKGWSRGMSTSRGRSMRSKVE) constitute a mitochondrion transit peptide. Residues 1–34 (MNQVFKGWSRGMSTSRGRSMRSKVESRMRKESGK) form a disordered region. Basic and acidic residues predominate over residues 22-34 (SKVESRMRKESGK). A CRM domain is found at 90–187 (ELFTSEQVQA…RNYRQPKNLI (98 aa)). The segment covering 255-265 (PYVFHGDKQSE) has biased composition (basic and acidic residues). Disordered regions lie at residues 255-287 (PYVF…DQEE) and 328-491 (RSRT…WDSD). Positions 277–287 (EPGDEDSDQEE) are enriched in acidic residues. Positions 345-359 (RRNDRDTHSQRRPND) are enriched in basic and acidic residues. The span at 360-375 (SDDDDDDGELDSEDDE) shows a compositional bias: acidic residues. Residues 392 to 416 (RPREDFKRRSPDPRPRPRAQVRSDD) show a composition bias toward basic and acidic residues. Residues 453 to 478 (TVSASSSKQSRFRNNSSRDGINNSKS) are compositionally biased toward polar residues.

Highly expressed in roots and meristemic regions of young seedlings. Expressed at low levels in stems, trichomes and stigma.

The protein localises to the mitochondrion. Involved in the splicing of group II introns in mitochondria. Required for the splicing of mitochondrial introns found in nad1, nad2, nad4, nad5, nad7, rps3 and cox2 genes. Splicing of mitochondrial introns is crucial for mitochondrial biogenesis and function, plant growth and development, and plant response to abiotic stresses. This is CRM-domain containing factor CFM9, mitochondrial from Arabidopsis thaliana (Mouse-ear cress).